We begin with the raw amino-acid sequence, 85 residues long: Growth factor (85 aa).

The N-terminal stretch at 1–19 (MVPRDLVATLLCAMCIVQA) is a signal peptide. One can recognise an EGF-like domain in the interval 33-77 (RIKLCNDDYKNYCLNNGTCFTVALNNVSLNPFCACHINYVGSRCQ). 3 disulfides stabilise this stretch: Cys-37/Cys-51, Cys-45/Cys-65, and Cys-67/Cys-76. N-linked (GlcNAc...) asparagine; by host glycosylation is found at Asn-48 and Asn-58.

The protein localises to the secreted. Functionally, stimulates the growth of some tissues. This Oryctolagus cuniculus (Rabbit) protein is Growth factor (MGF).